The chain runs to 379 residues: 4-hydroxy-3-methylbut-2-enyl diphosphate reductase (379 aa).

C39 contributes to the [4Fe-4S] cluster binding site. H69 provides a ligand contact to (2E)-4-hydroxy-3-methylbut-2-enyl diphosphate. H69 serves as a coordination point for dimethylallyl diphosphate. Residue H69 coordinates isopentenyl diphosphate. C130 is a [4Fe-4S] cluster binding site. H158 serves as a coordination point for (2E)-4-hydroxy-3-methylbut-2-enyl diphosphate. A dimethylallyl diphosphate-binding site is contributed by H158. H158 provides a ligand contact to isopentenyl diphosphate. Residue E160 is the Proton donor of the active site. (2E)-4-hydroxy-3-methylbut-2-enyl diphosphate is bound at residue T223. C261 is a binding site for [4Fe-4S] cluster. S290, S291, N292, and S352 together coordinate (2E)-4-hydroxy-3-methylbut-2-enyl diphosphate. Residues S290, S291, N292, and S352 each contribute to the dimethylallyl diphosphate site. The isopentenyl diphosphate site is built by S290, S291, N292, and S352.

It belongs to the IspH family. [4Fe-4S] cluster is required as a cofactor.

It carries out the reaction isopentenyl diphosphate + 2 oxidized [2Fe-2S]-[ferredoxin] + H2O = (2E)-4-hydroxy-3-methylbut-2-enyl diphosphate + 2 reduced [2Fe-2S]-[ferredoxin] + 2 H(+). The catalysed reaction is dimethylallyl diphosphate + 2 oxidized [2Fe-2S]-[ferredoxin] + H2O = (2E)-4-hydroxy-3-methylbut-2-enyl diphosphate + 2 reduced [2Fe-2S]-[ferredoxin] + 2 H(+). It functions in the pathway isoprenoid biosynthesis; dimethylallyl diphosphate biosynthesis; dimethylallyl diphosphate from (2E)-4-hydroxy-3-methylbutenyl diphosphate: step 1/1. Its pathway is isoprenoid biosynthesis; isopentenyl diphosphate biosynthesis via DXP pathway; isopentenyl diphosphate from 1-deoxy-D-xylulose 5-phosphate: step 6/6. Its function is as follows. Catalyzes the conversion of 1-hydroxy-2-methyl-2-(E)-butenyl 4-diphosphate (HMBPP) into a mixture of isopentenyl diphosphate (IPP) and dimethylallyl diphosphate (DMAPP). Acts in the terminal step of the DOXP/MEP pathway for isoprenoid precursor biosynthesis. This Synechocystis sp. (strain ATCC 27184 / PCC 6803 / Kazusa) protein is 4-hydroxy-3-methylbut-2-enyl diphosphate reductase.